The sequence spans 542 residues: Chaperonin GroEL 4 (542 aa).

ATP-binding positions include 30 to 33 (TLGP), lysine 51, 87 to 91 (DGTTT), glycine 415, and aspartate 496.

The protein belongs to the chaperonin (HSP60) family. As to quaternary structure, forms a cylinder of 14 subunits composed of two heptameric rings stacked back-to-back. Interacts with the co-chaperonin GroES.

Its subcellular location is the cytoplasm. The enzyme catalyses ATP + H2O + a folded polypeptide = ADP + phosphate + an unfolded polypeptide.. Functionally, together with its co-chaperonin GroES, plays an essential role in assisting protein folding. The GroEL-GroES system forms a nano-cage that allows encapsulation of the non-native substrate proteins and provides a physical environment optimized to promote and accelerate protein folding. The protein is Chaperonin GroEL 4 of Rhizobium etli (strain ATCC 51251 / DSM 11541 / JCM 21823 / NBRC 15573 / CFN 42).